The sequence spans 89 residues: Small ribosomal subunit protein uS15 (89 aa).

The protein belongs to the universal ribosomal protein uS15 family. In terms of assembly, part of the 30S ribosomal subunit. Forms a bridge to the 50S subunit in the 70S ribosome, contacting the 23S rRNA.

Functionally, one of the primary rRNA binding proteins, it binds directly to 16S rRNA where it helps nucleate assembly of the platform of the 30S subunit by binding and bridging several RNA helices of the 16S rRNA. Forms an intersubunit bridge (bridge B4) with the 23S rRNA of the 50S subunit in the ribosome. The protein is Small ribosomal subunit protein uS15 of Yersinia enterocolitica serotype O:8 / biotype 1B (strain NCTC 13174 / 8081).